Here is a 64-residue protein sequence, read N- to C-terminus: Large ribosomal subunit protein bL35 (64 aa).

Over residues 1–24 (MPKMKSHRGACKRFKKTASGKVKR) the composition is skewed to basic residues. The tract at residues 1–64 (MPKMKSHRGA…EKQIKRMILA (64 aa)) is disordered. The segment covering 25-35 (ERMYGSHNLEK) has biased composition (basic and acidic residues). A compositionally biased stretch (basic residues) spans 36–45 (KNRKRTRRLH).

The protein belongs to the bacterial ribosomal protein bL35 family.

The protein is Large ribosomal subunit protein bL35 of Prosthecochloris aestuarii (strain DSM 271 / SK 413).